The sequence spans 862 residues: DNA mismatch repair protein MutS (862 aa).

Position 618–625 (618–625 (GPNMGGKS)) interacts with ATP. Residues 799–824 (QLESRDNQASPAVASAPQQQSLSLSP) form a disordered region. Positions 806-824 (QASPAVASAPQQQSLSLSP) are enriched in low complexity.

This sequence belongs to the DNA mismatch repair MutS family.

Its function is as follows. This protein is involved in the repair of mismatches in DNA. It is possible that it carries out the mismatch recognition step. This protein has a weak ATPase activity. The sequence is that of DNA mismatch repair protein MutS from Shewanella denitrificans (strain OS217 / ATCC BAA-1090 / DSM 15013).